A 125-amino-acid chain; its full sequence is Large ribosomal subunit protein bL12 (125 aa).

It belongs to the bacterial ribosomal protein bL12 family. As to quaternary structure, homodimer. Part of the ribosomal stalk of the 50S ribosomal subunit. Forms a multimeric L10(L12)X complex, where L10 forms an elongated spine to which 2 to 4 L12 dimers bind in a sequential fashion. Binds GTP-bound translation factors.

Functionally, forms part of the ribosomal stalk which helps the ribosome interact with GTP-bound translation factors. Is thus essential for accurate translation. The sequence is that of Large ribosomal subunit protein bL12 from Helicobacter pylori (strain HPAG1).